Here is a 694-residue protein sequence, read N- to C-terminus: Putative L-type lectin-domain containing receptor kinase II.2 (694 aa).

The signal sequence occupies residues 1-24 (MAGVLRSLRFWMIICVQVLSLVLA). Residues 25–318 (QDRDEFVYHD…PTSRSKDSKN (294 aa)) lie on the Extracellular side of the membrane. The legume-lectin like stretch occupies residues 27–272 (RDEFVYHDFS…DQYILGWSFK (246 aa)). Residues Asn57, Asn58, Asn73, Asn131, Asn172, Asn183, Asn201, Asn208, Asn240, and Asn246 are each glycosylated (N-linked (GlcNAc...) asparagine). The segment at 283–314 (SKILDPPNRPPPPSSPPPPPPPPPTPPTSRSK) is disordered. Pro residues predominate over residues 289–309 (PNRPPPPSSPPPPPPPPPTPP). Residues 319–339 (IIIICVTVTSIAFLLMLGGFL) traverse the membrane as a helical segment. At 340 to 694 (YLYKKKKYAE…EDVTILFGGR (355 aa)) the chain is on the cytoplasmic side. The region spanning 375-650 (FRENRLLGAG…IQYLEGNATI (276 aa)) is the Protein kinase domain. Residues 381 to 389 (LGAGGFGKV) and Lys403 each bind ATP. Asp500 acts as the Proton acceptor in catalysis.

In the C-terminal section; belongs to the protein kinase superfamily. Ser/Thr protein kinase family. It in the N-terminal section; belongs to the leguminous lectin family.

It is found in the cell membrane. The enzyme catalyses L-seryl-[protein] + ATP = O-phospho-L-seryl-[protein] + ADP + H(+). It catalyses the reaction L-threonyl-[protein] + ATP = O-phospho-L-threonyl-[protein] + ADP + H(+). The sequence is that of Putative L-type lectin-domain containing receptor kinase II.2 (LECRK22) from Arabidopsis thaliana (Mouse-ear cress).